The primary structure comprises 330 residues: Carbonic anhydrase 1 (330 aa).

Positions 1 to 109 are chloroplast transit peptide-like; the sequence is MSTASAFAIN…AAARIDQITA (109 aa).

The protein belongs to the beta-class carbonic anhydrase family. As to quaternary structure, homohexamer.

It is found in the cytoplasm. It carries out the reaction hydrogencarbonate + H(+) = CO2 + H2O. Functionally, reversible hydration of carbon dioxide. This chain is Carbonic anhydrase 1, found in Flaveria linearis (Narrowleaf yellowtops).